The primary structure comprises 175 residues: MAFEDLLNDPVIQKYLHELVGPTGMPVAAAPPDGEVTDEELAEELGLELNDVRRALFILYENDLASYRRLRDEDSGWLTYLWTFQYENIPEQLEEEMHRLLEALENRRQYESENEFYLCGECQLRFEFDEAMEFGFECPECGGRLESMENDRLVNAMEQHIEALRDELHVETAEA.

Residues 8-90 (NDPVIQKYLH…LWTFQYENIP (83 aa)) form the HTH TFE/IIEalpha-type domain.

It belongs to the TFE family. As to quaternary structure, monomer. Interaction with RNA polymerase subunits RpoF and RpoE is necessary for Tfe stimulatory transcription activity. Able to interact with Tbp and RNA polymerase in the absence of DNA promoter. Interacts both with the preinitiation and elongation complexes.

Transcription factor that plays a role in the activation of archaeal genes transcribed by RNA polymerase. Facilitates transcription initiation by enhancing TATA-box recognition by TATA-box-binding protein (Tbp), and transcription factor B (Tfb) and RNA polymerase recruitment. Not absolutely required for transcription in vitro, but particularly important in cases where Tbp or Tfb function is not optimal. It dynamically alters the nucleic acid-binding properties of RNA polymerases by stabilizing the initiation complex and destabilizing elongation complexes. Seems to translocate with the RNA polymerase following initiation and acts by binding to the non template strand of the transcription bubble in elongation complexes. This chain is Transcription factor E, found in Natronomonas pharaonis (strain ATCC 35678 / DSM 2160 / CIP 103997 / JCM 8858 / NBRC 14720 / NCIMB 2260 / Gabara) (Halobacterium pharaonis).